The chain runs to 896 residues: C-type lectin domain-containing protein 180 (896 aa).

The first 18 residues, 1-18 (MRHLIFTGFVLTLTALEA), serve as a signal peptide directing secretion. Residues 54-178 (PWGDLYQFRA…CESTSPDHHA (125 aa)) form the C-type lectin domain. Asparagine 133 carries an N-linked (GlcNAc...) asparagine glycan. Cysteine 154 and cysteine 169 are disulfide-bonded. Residues asparagine 221 and asparagine 235 are each glycosylated (N-linked (GlcNAc...) asparagine). 4 disordered regions span residues 243 to 264 (STVKFSDSEEETSSEEEESVSK), 354 to 436 (VKQE…LAPE), 492 to 519 (EKLENSKKSEEEKEELAKKDQMSTEEQK), and 557 to 809 (KVKA…TTKP). Residues 250–260 (SEEETSSEEEE) are compositionally biased toward acidic residues. Composition is skewed to basic and acidic residues over residues 354–382 (VKQEKTDEKKVEDKKETLANELNDNKISE) and 395–406 (DMPKADIEPPKE). Positions 407–426 (EDCDEEGSGSGSGEEDEKDE) are enriched in acidic residues. Residues 427–436 (SSEKIELAPE) show a composition bias toward basic and acidic residues. Basic and acidic residues-rich tracts occupy residues 575 to 590 (KSAKEGKAEIKEKVGN), 607 to 663 (QNRE…ETKL), and 683 to 692 (EEPKSDKDSE). Low complexity predominate over residues 727–739 (STTTESTTVAVKE). The span at 740–768 (VPVDEIEKIAKLEAKQHTEDEKVTVETKQ) shows a compositional bias: basic and acidic residues. Low complexity predominate over residues 773–809 (TPAPTTSEKTSTTAAPSTKPAEETTTTTEAPSTTTKP).

It is found in the secreted. The chain is C-type lectin domain-containing protein 180 (clec-180) from Caenorhabditis elegans.